Here is a 359-residue protein sequence, read N- to C-terminus: Phosphate acyltransferase (359 aa).

This sequence belongs to the PlsX family. As to quaternary structure, homodimer. Probably interacts with PlsY.

It localises to the cytoplasm. The catalysed reaction is a fatty acyl-[ACP] + phosphate = an acyl phosphate + holo-[ACP]. It functions in the pathway lipid metabolism; phospholipid metabolism. Its function is as follows. Catalyzes the reversible formation of acyl-phosphate (acyl-PO(4)) from acyl-[acyl-carrier-protein] (acyl-ACP). This enzyme utilizes acyl-ACP as fatty acyl donor, but not acyl-CoA. The protein is Phosphate acyltransferase of Koribacter versatilis (strain Ellin345).